Here is a 368-residue protein sequence, read N- to C-terminus: Peptide chain release factor 2 (368 aa).

Q251 carries the post-translational modification N5-methylglutamine.

The protein belongs to the prokaryotic/mitochondrial release factor family. Post-translationally, methylated by PrmC. Methylation increases the termination efficiency of RF2.

The protein resides in the cytoplasm. Its function is as follows. Peptide chain release factor 2 directs the termination of translation in response to the peptide chain termination codons UGA and UAA. This is Peptide chain release factor 2 from Streptomyces avermitilis (strain ATCC 31267 / DSM 46492 / JCM 5070 / NBRC 14893 / NCIMB 12804 / NRRL 8165 / MA-4680).